A 415-amino-acid chain; its full sequence is Multidrug resistance protein MdtA (415 aa).

An N-terminal signal peptide occupies residues 1–21 (MKGSYKSRWVIVIVVVIAAIA). Disordered regions lie at residues 32 to 59 (SRSA…SGPL) and 392 to 415 (EAQS…GARS). Positions 399 to 415 (SEEKATSREYAKKGARS) are enriched in basic and acidic residues.

The protein belongs to the membrane fusion protein (MFP) (TC 8.A.1) family. Part of a tripartite efflux system composed of MdtA, MdtB and MdtC.

The protein localises to the cell inner membrane. Its function is as follows. The MdtABC tripartite complex confers resistance against novobiocin and deoxycholate. The chain is Multidrug resistance protein MdtA from Escherichia coli O17:K52:H18 (strain UMN026 / ExPEC).